The chain runs to 65 residues: Alpha-toxin Bot11 (65 aa).

One can recognise an LCN-type CS-alpha/beta domain in the interval 2–64 (KDGYIVDDRN…VRTVQAGRCR (63 aa)). Cystine bridges form between Cys-12–Cys-63, Cys-16–Cys-36, Cys-22–Cys-46, and Cys-26–Cys-48.

It belongs to the long (4 C-C) scorpion toxin superfamily. Sodium channel inhibitor family. Alpha subfamily. Expressed by the venom gland.

It is found in the secreted. Functionally, alpha toxins bind voltage-independently at site-3 of sodium channels (Nav) and inhibit the inactivation of the activated channels, thereby blocking neuronal transmission. This Buthus occitanus tunetanus (Common European scorpion) protein is Alpha-toxin Bot11.